A 152-amino-acid polypeptide reads, in one-letter code: Transcriptional regulator MraZ (152 aa).

SpoVT-AbrB domains follow at residues 5–52 and 81–124; these read ASAI…PLDE and AHEC…DETA.

Belongs to the MraZ family. Forms oligomers.

It localises to the cytoplasm. It is found in the nucleoid. The polypeptide is Transcriptional regulator MraZ (Shewanella woodyi (strain ATCC 51908 / MS32)).